Here is a 130-residue protein sequence, read N- to C-terminus: Nascent polypeptide-associated complex protein (130 aa).

In terms of domain architecture, NAC-A/B spans glycine 6–isoleucine 74. Residues proline 65 to isoleucine 91 form a disordered region. The span at proline 78–alanine 90 shows a compositional bias: acidic residues.

Belongs to the NAC-alpha family. As to quaternary structure, homodimer. Interacts with the ribosome. Binds ribosomal RNA.

Contacts the emerging nascent chain on the ribosome. The chain is Nascent polypeptide-associated complex protein from Halobacterium salinarum (strain ATCC 700922 / JCM 11081 / NRC-1) (Halobacterium halobium).